Here is a 660-residue protein sequence, read N- to C-terminus: MSKSGKKLTQKLKKNLPVTGPQAPTLYELMQWYCLNTNTHGCRRIVVSKGRLRRWIWISLTLCAVAVIFWQCALLLMSYYSVSASITVTFQKLVYPAVTICNLNPYSYSKVKDRLAALEKETSQTLKNIYGFTEPLIRSKRDVGVNVENSTEDIFLKQIPLYRLESVKGSQLVVSDLKTKKRTRMSAKVIHRDAESVQDPGNMVGFKLCDPKNSSDCTIFTFSSGVNAIQEWYRLHYTNILAKISMEDKIAMGYKADELIVTCFFDGLSCDARNFTLFHHPLYGNCYTFNSAERGNLLVSSMGGAEYGLKVVLYIDEDEYNPYLSTAAGAKILVHDQDEYPFIEYLGTELETATETSIGMQLTESAKLSDPYSDCTMDGRDVSVENLYNKKYTLQICLNSCFQREMVRSCGCAHYDQPLPNGAKYCNYEEYPSWIYCYFKVYKQFVQEELGCQSACRESCSFKEWTLTRSLAKWPSLNSEEWMLRVLSWELGEKLNKNLTKNDLANLNIFYQDLNSRSISESPTYNIVTLLSNFGGQLGLWMSCSMICVLEIIEVFFIDSFWVVLRQRWRNWWENRKENQAEDTPEIPVPTMTGHDNPLCVDNPICLGEEDPPTFNSALQLPQSQDSHVPRTPPPKYNTLRIQSAFQLETIDSDEDVERL.

The Cytoplasmic portion of the chain corresponds to 1–55; that stretch reads MSKSGKKLTQKLKKNLPVTGPQAPTLYELMQWYCLNTNTHGCRRIVVSKGRLRRW. A helical membrane pass occupies residues 56–76; sequence IWISLTLCAVAVIFWQCALLL. Over 77 to 537 the chain is Extracellular; sequence MSYYSVSASI…VTLLSNFGGQ (461 aa). Disulfide bonds link Cys101–Cys286, Cys209–Cys217, Cys263–Cys270, Cys375–Cys460, Cys397–Cys456, Cys401–Cys452, Cys410–Cys437, and Cys412–Cys426. Residues 538 to 558 traverse the membrane as a helical segment; sequence LGLWMSCSMICVLEIIEVFFI. The Cytoplasmic portion of the chain corresponds to 559 to 660; the sequence is DSFWVVLRQR…IDSDEDVERL (102 aa).

Belongs to the amiloride-sensitive sodium channel (TC 1.A.6) family. SCNN1G subfamily. Component of the heterotrimeric epithelial sodium channel (ENaC) composed of an alpha/SCNN1A, a beta/SCNN1B and a gamma/SCNN1G subunit.

The protein resides in the apical cell membrane. It catalyses the reaction Na(+)(in) = Na(+)(out). Originally identified and characterized by its inhibition by the diuretic drug amiloride. Functionally, this is one of the three pore-forming subunits of the heterotrimeric epithelial sodium channel (ENaC), a critical regulator of sodium balance and fluid homeostasis. ENaC operates in epithelial tissues, where it mediates the electrodiffusion of sodium ions from extracellular fluid through the apical membrane of cells, with water following osmotically. In Xenopus laevis (African clawed frog), this protein is Epithelial sodium channel subunit gamma (scnn1g-a).